The primary structure comprises 290 residues: UDP-N-acetylenolpyruvoylglucosamine reductase (290 aa).

Residues 20-187 (GVGGESEMWF…SRVRLKLRPS (168 aa)) enclose the FAD-binding PCMH-type domain. R167 is an active-site residue.

This sequence belongs to the MurB family. Requires FAD as cofactor.

The protein localises to the cytoplasm. The enzyme catalyses UDP-N-acetyl-alpha-D-muramate + NADP(+) = UDP-N-acetyl-3-O-(1-carboxyvinyl)-alpha-D-glucosamine + NADPH + H(+). It functions in the pathway cell wall biogenesis; peptidoglycan biosynthesis. Cell wall formation. The chain is UDP-N-acetylenolpyruvoylglucosamine reductase from Deinococcus radiodurans (strain ATCC 13939 / DSM 20539 / JCM 16871 / CCUG 27074 / LMG 4051 / NBRC 15346 / NCIMB 9279 / VKM B-1422 / R1).